Reading from the N-terminus, the 264-residue chain is L-aspartate dehydrogenase (264 aa).

NAD(+)-binding residues include Ala120 and Asn186. His216 is a catalytic residue.

This sequence belongs to the L-aspartate dehydrogenase family.

The catalysed reaction is L-aspartate + NADP(+) + H2O = oxaloacetate + NH4(+) + NADPH + H(+). It catalyses the reaction L-aspartate + NAD(+) + H2O = oxaloacetate + NH4(+) + NADH + H(+). The protein operates within cofactor biosynthesis; NAD(+) biosynthesis; iminoaspartate from L-aspartate (dehydrogenase route): step 1/1. Specifically catalyzes the NAD or NADP-dependent dehydrogenation of L-aspartate to iminoaspartate. This is L-aspartate dehydrogenase from Serratia proteamaculans (strain 568).